The chain runs to 715 residues: Probable phospholipase YOR022C, mitochondrial (715 aa).

The N-terminal 22 residues, 1–22 (MLRFTHRGLPSSTRFRNIFVRL), are a transit peptide targeting the mitochondrion. Disordered stretches follow at residues 161-180 (YPVD…NKDE), 242-268 (TSTS…SRSI), and 311-340 (YNNA…RQIR). The segment covering 242–251 (TSTSFKAAKT) has biased composition (low complexity). A compositionally biased stretch (polar residues) spans 311 to 324 (YNNADNSQGANASS). Ser501 is an active-site residue. Positions 519–700 (LEFQVDNLFF…AAFILKEILS (182 aa)) constitute a DDHD domain.

The protein belongs to the PA-PLA1 family.

It is found in the mitochondrion. Probable phospholipase that hydrolyzes phosphatidic acid. This is Probable phospholipase YOR022C, mitochondrial from Saccharomyces cerevisiae (strain ATCC 204508 / S288c) (Baker's yeast).